Consider the following 1128-residue polypeptide: Major DNA-binding protein (1128 aa).

The segment at 1104-1128 (LGGGGQGSGGRRKRRLATVLPGLEV) is required for nuclear localization.

This sequence belongs to the herpesviridae major DNA-binding protein family. As to quaternary structure, homooligomers. Forms double-helical filaments necessary for the formation of replication compartments within the host nucleus. Interacts with the origin-binding protein. Interacts with the helicase primase complex; this interaction stimulates primer synthesis activity of the helicase-primase complex. Interacts with the DNA polymerase. Interacts with the alkaline exonuclease; this interaction increases its nuclease processivity.

The protein resides in the virion tegument. It is found in the host nucleus. In terms of biological role, plays several crucial roles in viral infection. Participates in the opening of the viral DNA origin to initiate replication by interacting with the origin-binding protein. May disrupt loops, hairpins and other secondary structures present on ssDNA to reduce and eliminate pausing of viral DNA polymerase at specific sites during elongation. Promotes viral DNA recombination by performing strand-transfer, characterized by the ability to transfer a DNA strand from a linear duplex to a complementary single-stranded DNA circle. Can also catalyze the renaturation of complementary single strands. Additionally, reorganizes the host cell nucleus, leading to the formation of prereplicative sites and replication compartments. This process is driven by the protein which can form double-helical filaments in the absence of DNA. The protein is Major DNA-binding protein of Homo sapiens (Human).